Reading from the N-terminus, the 86-residue chain is uncharacterized protein (86 aa).

It localises to the mitochondrion. This is an uncharacterized protein from Marchantia polymorpha (Common liverwort).